A 214-amino-acid polypeptide reads, in one-letter code: uncharacterized protein (214 aa).

2 CBS domains span residues 7-65 and 69-129; these read MDKN…KKPI and MRPV…EIPV.

This is an uncharacterized protein from Methanocaldococcus jannaschii (strain ATCC 43067 / DSM 2661 / JAL-1 / JCM 10045 / NBRC 100440) (Methanococcus jannaschii).